Reading from the N-terminus, the 126-residue chain is Small ribosomal subunit protein uS13 (126 aa).

A disordered region spans residues 94–126; it reads RGLPVHGQRTSTNARTRKGPRRAIAGKKKPGKK. A compositionally biased stretch (basic residues) spans 108–126; that stretch reads RTRKGPRRAIAGKKKPGKK.

Belongs to the universal ribosomal protein uS13 family. As to quaternary structure, part of the 30S ribosomal subunit. Forms a loose heterodimer with protein S19. Forms two bridges to the 50S subunit in the 70S ribosome.

Functionally, located at the top of the head of the 30S subunit, it contacts several helices of the 16S rRNA. In the 70S ribosome it contacts the 23S rRNA (bridge B1a) and protein L5 of the 50S subunit (bridge B1b), connecting the 2 subunits; these bridges are implicated in subunit movement. Contacts the tRNAs in the A and P-sites. This is Small ribosomal subunit protein uS13 from Streptomyces avermitilis (strain ATCC 31267 / DSM 46492 / JCM 5070 / NBRC 14893 / NCIMB 12804 / NRRL 8165 / MA-4680).